The sequence spans 595 residues: GRB2-associated-binding protein 3 (595 aa).

The PH domain maps to 5–117; it reads DTVCMGWLIK…WVHSISQVCN (113 aa). Positions 295–339 are disordered; the sequence is SGVKELNIMSNTPPPRPPKPSYLSEQRQDQPLLTGHSSNKKPGYT. Polar residues predominate over residues 317–331; it reads LSEQRQDQPLLTGHS. Serine 346 is modified (phosphoserine). Disordered stretches follow at residues 389–408 and 418–463; these read PSAEDSYVPMSPKGTASELR and PMSS…QEHT. The span at 454–463 shows a compositional bias: polar residues; the sequence is RNLSTIQEHT. Serine 480 bears the Phosphoserine mark. Residues 493–513 are disordered; that stretch reads STPSEEEEEEEEEEEEEEEEE. Positions 496–513 are enriched in acidic residues; it reads SEEEEEEEEEEEEEEEEE.

It belongs to the GAB family. As to quaternary structure, interacts with PIK3R/p85, SHP2 and GRAP2/MONA. May interact with Grb2. Phosphorylated on tyrosine residue(s) after macrophage colony-stimulating factor (M-CSF) receptor stimulation. In terms of tissue distribution, highly expressed in spleen and thymus and weakly in brain, heart, lung, kidney, uterus, and embryonic stem cells. Also expressed in myeloid and macrophage cell lines.

In Mus musculus (Mouse), this protein is GRB2-associated-binding protein 3 (Gab3).